We begin with the raw amino-acid sequence, 465 residues long: Glutamate--tRNA ligase (465 aa).

The 'HIGH' region signature appears at 11 to 21 (PSPTGFIHLGN). Positions 243–247 (KMSKR) match the 'KMSKS' region motif. K246 contacts ATP.

The protein belongs to the class-I aminoacyl-tRNA synthetase family. Glutamate--tRNA ligase type 1 subfamily. Monomer.

The protein localises to the cytoplasm. The catalysed reaction is tRNA(Glu) + L-glutamate + ATP = L-glutamyl-tRNA(Glu) + AMP + diphosphate. Functionally, catalyzes the attachment of glutamate to tRNA(Glu) in a two-step reaction: glutamate is first activated by ATP to form Glu-AMP and then transferred to the acceptor end of tRNA(Glu). This chain is Glutamate--tRNA ligase, found in Cupriavidus metallidurans (strain ATCC 43123 / DSM 2839 / NBRC 102507 / CH34) (Ralstonia metallidurans).